Here is a 324-residue protein sequence, read N- to C-terminus: Viral cathepsin (324 aa).

An N-terminal signal peptide occupies residues methionine 1–cysteine 16. A propeptide spans alanine 17–glycine 113 (activation peptide). 3 disulfides stabilise this stretch: cysteine 134–cysteine 175, cysteine 168–cysteine 208, and cysteine 263–cysteine 311. Cysteine 137 is a catalytic residue. Residue asparagine 159 is glycosylated (N-linked (GlcNAc...) asparagine; by host). Active-site residues include histidine 270 and asparagine 290.

Belongs to the peptidase C1 family. Synthesized as an inactive proenzyme and activated by proteolytic removal of the inhibitory propeptide.

It carries out the reaction Endopeptidase of broad specificity, hydrolyzing substrates of both cathepsin L and cathepsin B.. Cysteine protease that plays an essential role in host liquefaction to facilitate horizontal transmission of the virus. May participate in the degradation of foreign protein expressed by the baculovirus system. In Choristoneura fumiferana nuclear polyhedrosis virus (CfMNPV), this protein is Viral cathepsin (Vcath).